Reading from the N-terminus, the 344-residue chain is Methionine import ATP-binding protein MetN (344 aa).

Positions 2 to 241 (IEINQVNKVF…PKTELAHDFI (240 aa)) constitute an ABC transporter domain. 38–45 (GSSGAGKS) serves as a coordination point for ATP.

Belongs to the ABC transporter superfamily. Methionine importer (TC 3.A.1.24) family. As to quaternary structure, the complex is composed of two ATP-binding proteins (MetN), two transmembrane proteins (MetI) and a solute-binding protein (MetQ).

It is found in the cell inner membrane. The catalysed reaction is L-methionine(out) + ATP + H2O = L-methionine(in) + ADP + phosphate + H(+). The enzyme catalyses D-methionine(out) + ATP + H2O = D-methionine(in) + ADP + phosphate + H(+). In terms of biological role, part of the ABC transporter complex MetNIQ involved in methionine import. Responsible for energy coupling to the transport system. The polypeptide is Methionine import ATP-binding protein MetN (Vibrio vulnificus (strain CMCP6)).